A 493-amino-acid polypeptide reads, in one-letter code: D-glyceraldehyde dehydrogenase (NADP(+)) (493 aa).

Residues 144-147, Arg-155, 170-174, 202-208, 223-246, Cys-279, and 379-381 each bind NADP(+); these read TPWN, KPSSD, KGSEIGD, GSTS…ILEL, and EIF. Residues Asn-147 and Arg-155 each contribute to the substrate site. The active-site Proton acceptor is Glu-245. Cys-279 serves as a coordination point for substrate. Catalysis depends on Cys-279, which acts as the Proton donor.

It belongs to the aldehyde dehydrogenase family. Glyceraldehyde dehydrogenase subfamily. As to quaternary structure, homotetramer. Dimer of dimers.

The catalysed reaction is D-glyceraldehyde + NADP(+) + H2O = (R)-glycerate + NADPH + 2 H(+). The protein operates within carbohydrate degradation; glycolysis. Its activity is regulated as follows. Stable for 2 hours at 60 degrees Celsius but activity is decreased to less than 50 percent within 15 minutes at 70 degrees Celsius. Its function is as follows. NADP-dependent dehydrogenase of the nED (non-phosphorylated Entner-Doudoroff) pathway with highest activity towards glyceraldehydes (e.g. D,L-glyceraldehyde and D-glyceraldehyde), to a lesser extent towards D,L-glyceraldehyde-3-phosphate and glycolaldehyde, but no activity towards aliphatic or aromatic aldehydes. This chain is D-glyceraldehyde dehydrogenase (NADP(+)), found in Picrophilus torridus (strain ATCC 700027 / DSM 9790 / JCM 10055 / NBRC 100828 / KAW 2/3).